The sequence spans 655 residues: Protein-glucosylgalactosylhydroxylysine glucosidase (655 aa).

A substrate-binding site is contributed by 258–259; the sequence is WD. The active-site Proton donor is the Glu388. 456–457 serves as a coordination point for substrate; sequence KQ.

Belongs to the glycosyl hydrolase 65 family.

It catalyses the reaction (5R)-5-O-[alpha-D-glucosyl-(1-&gt;2)-beta-D-galactosyl]-5-hydroxy-L-lysyl-[collagen] + H2O = (5R)-5-O-(beta-D-galactosyl)-5-hydroxy-L-lysyl-[collagen] + D-glucose. Its function is as follows. Catalyzes the hydrolysis of glucose from the disaccharide unit linked to hydroxylysine residues of collagen and collagen-like proteins. This chain is Protein-glucosylgalactosylhydroxylysine glucosidase, found in Danio rerio (Zebrafish).